The primary structure comprises 359 residues: Insulin gene enhancer protein isl-2a (359 aa).

LIM zinc-binding domains follow at residues 27–80 (CVGC…CKRD) and 30–143 (CGSQ…RADH). The segment at 171 to 190 (EPVPVRQPPHRNHVHKQSEK) is disordered. The homeobox DNA-binding region spans 191 to 250 (TTRVRTVLNEKQLHTLRTCYNANPRPDALMKEQLVEMTGLSPRVIRVWFQNKRCKDKKKS). The span at 326-336 (ESGSLGNSSGS) shows a compositional bias: low complexity. The tract at residues 326-359 (ESGSLGNSSGSDVTSLSSQLPDTPNSMVPSPVET) is disordered. Over residues 337–359 (DVTSLSSQLPDTPNSMVPSPVET) the composition is skewed to polar residues.

Its subcellular location is the nucleus. Its function is as follows. Binds to one of the cis-acting domain of the insulin gene enhancer. May be involved in subtype specialization of primary motoneurons. This chain is Insulin gene enhancer protein isl-2a (isl2a), found in Danio rerio (Zebrafish).